The chain runs to 386 residues: Succinate--CoA ligase [ADP-forming] subunit beta (386 aa).

The ATP-grasp domain maps to 9–244; sequence KEILRNFGVP…LDEEDPAEVE (236 aa). Residues lysine 46, 53–55, glutamate 99, alanine 102, and glutamate 107 each bind ATP; that span reads GRG. The Mg(2+) site is built by asparagine 199 and aspartate 213. Substrate is bound by residues asparagine 264 and 321-323; that span reads GIM.

Belongs to the succinate/malate CoA ligase beta subunit family. Heterotetramer of two alpha and two beta subunits. Mg(2+) is required as a cofactor.

The catalysed reaction is succinate + ATP + CoA = succinyl-CoA + ADP + phosphate. It carries out the reaction GTP + succinate + CoA = succinyl-CoA + GDP + phosphate. It functions in the pathway carbohydrate metabolism; tricarboxylic acid cycle; succinate from succinyl-CoA (ligase route): step 1/1. Succinyl-CoA synthetase functions in the citric acid cycle (TCA), coupling the hydrolysis of succinyl-CoA to the synthesis of either ATP or GTP and thus represents the only step of substrate-level phosphorylation in the TCA. The beta subunit provides nucleotide specificity of the enzyme and binds the substrate succinate, while the binding sites for coenzyme A and phosphate are found in the alpha subunit. This is Succinate--CoA ligase [ADP-forming] subunit beta from Polaromonas sp. (strain JS666 / ATCC BAA-500).